The following is a 48-amino-acid chain: ATP synthase protein 8 (48 aa).

Residues 4-24 (LVPFFFVNQVVYAFVILTVLI) form a helical membrane-spanning segment.

This sequence belongs to the ATPase protein 8 family. F-type ATPases have 2 components, CF(1) - the catalytic core - and CF(0) - the membrane proton channel.

It localises to the mitochondrion membrane. Mitochondrial membrane ATP synthase (F(1)F(0) ATP synthase or Complex V) produces ATP from ADP in the presence of a proton gradient across the membrane which is generated by electron transport complexes of the respiratory chain. F-type ATPases consist of two structural domains, F(1) - containing the extramembraneous catalytic core and F(0) - containing the membrane proton channel, linked together by a central stalk and a peripheral stalk. During catalysis, ATP synthesis in the catalytic domain of F(1) is coupled via a rotary mechanism of the central stalk subunits to proton translocation. Part of the complex F(0) domain. Minor subunit located with subunit a in the membrane. The polypeptide is ATP synthase protein 8 (atp8) (Aspergillus amstelodami).